We begin with the raw amino-acid sequence, 151 residues long: Large ribosomal subunit protein uL15 (151 aa).

The tract at residues 1-60 (MAENSPLKAHNLRPAPGAKTAKTRVGRGEASKGKTAGRGTKGTKARYQVPERFEGGQMPL) is disordered.

Belongs to the universal ribosomal protein uL15 family. As to quaternary structure, part of the 50S ribosomal subunit.

Functionally, binds to the 23S rRNA. In Streptomyces griseus subsp. griseus (strain JCM 4626 / CBS 651.72 / NBRC 13350 / KCC S-0626 / ISP 5235), this protein is Large ribosomal subunit protein uL15.